We begin with the raw amino-acid sequence, 281 residues long: NADPH-dependent 7-cyano-7-deazaguanine reductase (281 aa).

81–83 (IES) lines the substrate pocket. Residue 83 to 84 (SK) participates in NADPH binding. Catalysis depends on Cys188, which acts as the Thioimide intermediate. Residue Asp195 is the Proton donor of the active site. 227 to 228 (HE) lines the substrate pocket. 256-257 (RG) contacts NADPH.

The protein belongs to the GTP cyclohydrolase I family. QueF type 2 subfamily. In terms of assembly, homodimer.

Its subcellular location is the cytoplasm. The catalysed reaction is 7-aminomethyl-7-carbaguanine + 2 NADP(+) = 7-cyano-7-deazaguanine + 2 NADPH + 3 H(+). It participates in tRNA modification; tRNA-queuosine biosynthesis. In terms of biological role, catalyzes the NADPH-dependent reduction of 7-cyano-7-deazaguanine (preQ0) to 7-aminomethyl-7-deazaguanine (preQ1). This is NADPH-dependent 7-cyano-7-deazaguanine reductase from Paracidovorax citrulli (strain AAC00-1) (Acidovorax citrulli).